Reading from the N-terminus, the 158-residue chain is Cyclic pyranopterin monophosphate synthase (158 aa).

Residues 76–78 (LCH) and 114–115 (ME) each bind substrate. D129 is a catalytic residue.

Belongs to the MoaC family. Homohexamer; trimer of dimers.

The enzyme catalyses (8S)-3',8-cyclo-7,8-dihydroguanosine 5'-triphosphate = cyclic pyranopterin phosphate + diphosphate. It functions in the pathway cofactor biosynthesis; molybdopterin biosynthesis. Its function is as follows. Catalyzes the conversion of (8S)-3',8-cyclo-7,8-dihydroguanosine 5'-triphosphate to cyclic pyranopterin monophosphate (cPMP). The polypeptide is Cyclic pyranopterin monophosphate synthase (Shewanella baltica (strain OS155 / ATCC BAA-1091)).